The chain runs to 147 residues: F420H(2)-dependent reductase Rv1155 (147 aa).

Residues Gln-32, Gln-37, Ser-50, 56–60 (AKTRN), 77–79 (WSY), and His-138 each bind coenzyme F420-(gamma-Glu)n.

Belongs to the F420H(2)-dependent biliverdin reductase family. In terms of assembly, homodimer.

Functionally, F420H(2)-dependent reductase able to catalyze the reduction of biliverdin-IXalpha to bilirubin-IXalpha in vitro. However, kinetic parameters show that it is less efficient than the biliverdin reductase Rv2074 and suggest biliverdin-IXalpha is unlikely to be the native substrate of Rv1155, which probably catalyzes the reduction of an alternative molecule in vivo. Binds coenzyme F420, but does not bind FMN or other flavins. Cannot use pyridoxine 5'-phosphate, pyridoxamine 5'-phosphate, pyridoxal 5'-phosphate (PLP), the anti-tuberculosis drug PA-824 or aflatoxin analogs as substrates. The sequence is that of F420H(2)-dependent reductase Rv1155 from Mycobacterium tuberculosis (strain ATCC 25618 / H37Rv).